A 169-amino-acid polypeptide reads, in one-letter code: Secreted RxLR effector protein BLN03 (169 aa).

The first 21 residues, 1–21 (MRPRKYIVVVLLSIAYTMCLA), serve as a signal peptide directing secretion. The dEER signature appears at 51–54 (TEER). Residues 149–169 (GSAFLFVIGFIVLLAFAMTAV) traverse the membrane as a helical segment.

The protein belongs to the RxLR effector family. Interacts with host transcription factor NAC069.

It is found in the secreted. The protein localises to the host membrane. Its function is as follows. Secreted effector that inhibits stress-induced relocalization of the endoplasmic reticulum tail-anchored transcription factors to the nucleus, thus affecting stress responses. This is Secreted RxLR effector protein BLN03 from Bremia lactucae (Lettuce downy mildew).